The sequence spans 221 residues: Protein-L-isoaspartate O-methyltransferase (221 aa).

Residue Ser-60 is part of the active site.

The protein belongs to the methyltransferase superfamily. L-isoaspartyl/D-aspartyl protein methyltransferase family.

It localises to the cytoplasm. It catalyses the reaction [protein]-L-isoaspartate + S-adenosyl-L-methionine = [protein]-L-isoaspartate alpha-methyl ester + S-adenosyl-L-homocysteine. Functionally, catalyzes the methyl esterification of L-isoaspartyl residues in peptides and proteins that result from spontaneous decomposition of normal L-aspartyl and L-asparaginyl residues. It plays a role in the repair and/or degradation of damaged proteins. In Rhodospirillum centenum (strain ATCC 51521 / SW), this protein is Protein-L-isoaspartate O-methyltransferase.